A 451-amino-acid chain; its full sequence is Glyceraldehyde-3-phosphate dehydrogenase B, chloroplastic (451 aa).

Residues 1–83 (MASHAALAPS…AAPVRGETVA (83 aa)) constitute a chloroplast transit peptide. NADP(+) is bound by residues 94–95 (RI), aspartate 118, and arginine 163. D-glyceraldehyde 3-phosphate is bound by residues 237-239 (SCT), threonine 268, arginine 283, 296-297 (TG), and arginine 319. Cysteine 238 (nucleophile) is an active-site residue. Asparagine 402 is a binding site for NADP(+).

It belongs to the glyceraldehyde-3-phosphate dehydrogenase family. Tetramer of either four A chains (GAPDH 2) or two A and two B chains (GAPDH 1).

It localises to the plastid. It is found in the chloroplast. The catalysed reaction is D-glyceraldehyde 3-phosphate + phosphate + NADP(+) = (2R)-3-phospho-glyceroyl phosphate + NADPH + H(+). Its pathway is carbohydrate biosynthesis; Calvin cycle. The chain is Glyceraldehyde-3-phosphate dehydrogenase B, chloroplastic (GAPB) from Spinacia oleracea (Spinach).